A 163-amino-acid polypeptide reads, in one-letter code: Neurotrophin-3 (163 aa).

A signal peptide spans 1–3 (IQS). A propeptide spanning residues 4-119 (TSMDQGILTE…VLNRTSRRKR (116 aa)) is cleaved from the precursor. Residues 35–61 (KQTARTKDGTQTTVKKSEAEADATASQ) are disordered. Asn112 is a glycosylation site (N-linked (GlcNAc...) asparagine).

It belongs to the NGF-beta family.

The protein resides in the secreted. In terms of biological role, seems to promote the survival of visceral and proprioceptive sensory neurons. In Corallus caninus (Emerald tree boa), this protein is Neurotrophin-3 (NTF3).